The following is a 56-amino-acid chain: Large ribosomal subunit protein bL32 (56 aa).

Residues 1–34 (MAVQQNKKSRSKRGMRRSHDSLSTAQLSVDATSG) are disordered. Residues 7-16 (KKSRSKRGMR) show a composition bias toward basic residues. Polar residues predominate over residues 21-31 (SLSTAQLSVDA).

It belongs to the bacterial ribosomal protein bL32 family.

The protein is Large ribosomal subunit protein bL32 of Shewanella frigidimarina (strain NCIMB 400).